The primary structure comprises 493 residues: CBL-interacting protein kinase 26 (493 aa).

One can recognise a Protein kinase domain in the interval tyrosine 12–tyrosine 266. Residues leucine 18 to valine 26 and lysine 41 each bind ATP. The active-site Proton acceptor is the aspartate 134. Positions aspartate 152–glutamate 181 are activation loop. Residues lysine 311 to lysine 332 are disordered. Residues glycine 316–lysine 332 show a composition bias toward polar residues. Positions threonine 320–glutamate 360 constitute an NAF domain. A PPI region spans residues arginine 365 to isoleucine 394. The tract at residues glycine 465–glycine 493 is disordered.

This sequence belongs to the protein kinase superfamily. CAMK Ser/Thr protein kinase family. SNF1 subfamily. The cofactor is Mn(2+).

It catalyses the reaction L-seryl-[protein] + ATP = O-phospho-L-seryl-[protein] + ADP + H(+). It carries out the reaction L-threonyl-[protein] + ATP = O-phospho-L-threonyl-[protein] + ADP + H(+). CIPK serine-threonine protein kinases interact with CBL proteins. Binding of a CBL protein to the regulatory NAF domain of CIPK protein lead to the activation of the kinase in a calcium-dependent manner. This Oryza sativa subsp. japonica (Rice) protein is CBL-interacting protein kinase 26 (CIPK26).